A 28-amino-acid polypeptide reads, in one-letter code: Ranatuerin-2LT (28 aa).

Residues C23 and C28 are joined by a disulfide bond.

In terms of tissue distribution, expressed by the skin glands.

It localises to the secreted. Functionally, has antibacterial activity. This is Ranatuerin-2LT from Rana latastei (Italian agile frog).